A 130-amino-acid chain; its full sequence is Small ribosomal subunit protein uS8 (130 aa).

This sequence belongs to the universal ribosomal protein uS8 family. Part of the 30S ribosomal subunit. Contacts proteins S5 and S12.

Its function is as follows. One of the primary rRNA binding proteins, it binds directly to 16S rRNA central domain where it helps coordinate assembly of the platform of the 30S subunit. This is Small ribosomal subunit protein uS8 from Aliivibrio fischeri (strain MJ11) (Vibrio fischeri).